A 332-amino-acid chain; its full sequence is 5-dehydro-2-deoxygluconokinase (332 aa).

The protein belongs to the carbohydrate kinase PfkB family.

It carries out the reaction 5-dehydro-2-deoxy-D-gluconate + ATP = 6-phospho-5-dehydro-2-deoxy-D-gluconate + ADP + H(+). Its pathway is polyol metabolism; myo-inositol degradation into acetyl-CoA; acetyl-CoA from myo-inositol: step 5/7. Functionally, catalyzes the phosphorylation of 5-dehydro-2-deoxy-D-gluconate (2-deoxy-5-keto-D-gluconate or DKG) to 6-phospho-5-dehydro-2-deoxy-D-gluconate (DKGP). The chain is 5-dehydro-2-deoxygluconokinase from Bacillus thuringiensis (strain Al Hakam).